Consider the following 462-residue polypeptide: uncharacterized protein (462 aa).

A TRAM domain is found at 12 to 70 (MLKKNDIIQVAISDLSHEGAGVAKHDGFVFFVDNALPEEVIDMRVLKVNKNSGFGKVEA). The S-adenosyl-L-methionine site is built by glutamine 294, tyrosine 323, glutamate 344, and aspartate 392. The active-site Nucleophile is the cysteine 419.

This sequence belongs to the class I-like SAM-binding methyltransferase superfamily. RNA M5U methyltransferase family.

This is an uncharacterized protein from Streptococcus pyogenes serotype M1.